A 332-amino-acid chain; its full sequence is Glycerol-3-phosphate dehydrogenase [NAD(P)+] (332 aa).

Positions 11, 30, and 108 each coordinate NADPH. Residues K108, G137, and S139 each coordinate sn-glycerol 3-phosphate. Residue A141 participates in NADPH binding. Sn-glycerol 3-phosphate contacts are provided by K192, D245, S255, R256, and N257. The active-site Proton acceptor is the K192. R256 contacts NADPH. NADPH is bound by residues V280 and E282.

The protein belongs to the NAD-dependent glycerol-3-phosphate dehydrogenase family.

The protein localises to the cytoplasm. It carries out the reaction sn-glycerol 3-phosphate + NAD(+) = dihydroxyacetone phosphate + NADH + H(+). It catalyses the reaction sn-glycerol 3-phosphate + NADP(+) = dihydroxyacetone phosphate + NADPH + H(+). Its pathway is membrane lipid metabolism; glycerophospholipid metabolism. In terms of biological role, catalyzes the reduction of the glycolytic intermediate dihydroxyacetone phosphate (DHAP) to sn-glycerol 3-phosphate (G3P), the key precursor for phospholipid synthesis. The polypeptide is Glycerol-3-phosphate dehydrogenase [NAD(P)+] (Burkholderia multivorans (strain ATCC 17616 / 249)).